The primary structure comprises 184 residues: Ras-related protein Rap-1b (184 aa).

Residue 10–18 (GSGGVGKSA) coordinates GTP. An interaction with KRIT1 region spans residues 25–67 (QGIFVEKYDPTIEDSYRKQVEVDAQQCMLEILDTAGTEQFTAM). Positions 32 to 40 (YDPTIEDSY) match the Effector region motif. GTP contacts are provided by residues 57-61 (DTAGT), 116-119 (NKCD), and 147-149 (SAK). S179 is modified (phosphoserine; by PKA). C181 bears the Cysteine methyl ester mark. The S-geranylgeranyl cysteine moiety is linked to residue C181. Residues 182–184 (QLL) constitute a propeptide, removed in mature form.

Heterodimer with RAP1GAP. Interacts with EPAC2. Interacts with SGSM1. Interacts with SGSM2. Interacts with SGSM3. Interacts with KRIT1. Interacts with RAP1GDS1.

It is found in the cell membrane. It localises to the cytoplasm. The protein localises to the cytosol. The protein resides in the cell junction. The catalysed reaction is GTP + H2O = GDP + phosphate + H(+). With respect to regulation, activated by guanine nucleotide-exchange factor (GEF) EPAC2 in a cAMP-dependent manner. In terms of biological role, GTP-binding protein that possesses intrinsic GTPase activity. Contributes to the polarizing activity of KRIT1 and CDH5 in the establishment and maintenance of correct endothelial cell polarity and vascular lumen. Required for the localization of phosphorylated PRKCZ, PARD3 and TIAM1 to the cell junction. Plays a role in the establishment of basal endothelial barrier function. This chain is Ras-related protein Rap-1b (RAP1B), found in Bos taurus (Bovine).